The sequence spans 356 residues: MQKDALNNVRITDEQVLMTPEQLKAAFPLSLAQEAQIAQSRGIISDIIAGRDPRLLVVCGPCSIHDPETALEYARRFKALAAEVSDSLYLVMRVYFEKPRTTVGWKGLINDPHMDGSFDVEAGLKIARQLLVELVNMGLPLATEALDPNSPQYLGDLFSWSAIGARTTESQTHREMASGLSMPVGFKNGTDGSLATAINAMRAAAQPHRFVGINQAGQVALLQTQGNPHGHVILRGGKAPNYSPADVAQCEKEMEQAGLRPSLMVDCSHGNSNKDYRRQPAVAESVVAQIKDGNRSIIGLMIESNIHEGNQSSEQPRSEMKYGVSVTDACISWEMTDALLREIHKDLSGQLAVRVA.

This sequence belongs to the class-I DAHP synthase family.

The enzyme catalyses D-erythrose 4-phosphate + phosphoenolpyruvate + H2O = 7-phospho-2-dehydro-3-deoxy-D-arabino-heptonate + phosphate. Its pathway is metabolic intermediate biosynthesis; chorismate biosynthesis; chorismate from D-erythrose 4-phosphate and phosphoenolpyruvate: step 1/7. Functionally, stereospecific condensation of phosphoenolpyruvate (PEP) and D-erythrose-4-phosphate (E4P) giving rise to 3-deoxy-D-arabino-heptulosonate-7-phosphate (DAHP). The sequence is that of Phospho-2-dehydro-3-deoxyheptonate aldolase, Tyr-sensitive (aroF) from Salmonella typhi.